The sequence spans 224 residues: Deoxyribose-phosphate aldolase (224 aa).

Catalysis depends on Asp-92, which acts as the Proton donor/acceptor. Lys-155 acts as the Schiff-base intermediate with acetaldehyde in catalysis. The Proton donor/acceptor role is filled by Lys-184.

It belongs to the DeoC/FbaB aldolase family. DeoC type 1 subfamily.

The protein localises to the cytoplasm. It catalyses the reaction 2-deoxy-D-ribose 5-phosphate = D-glyceraldehyde 3-phosphate + acetaldehyde. It functions in the pathway carbohydrate degradation; 2-deoxy-D-ribose 1-phosphate degradation; D-glyceraldehyde 3-phosphate and acetaldehyde from 2-deoxy-alpha-D-ribose 1-phosphate: step 2/2. Catalyzes a reversible aldol reaction between acetaldehyde and D-glyceraldehyde 3-phosphate to generate 2-deoxy-D-ribose 5-phosphate. The sequence is that of Deoxyribose-phosphate aldolase from Clostridium perfringens (strain SM101 / Type A).